Reading from the N-terminus, the 228-residue chain is Eukaryotic translation initiation factor 6 (228 aa).

It belongs to the eIF-6 family. In terms of assembly, monomer. Associates with the 60S ribosomal subunit.

The protein resides in the cytoplasm. It localises to the nucleus. Its subcellular location is the nucleolus. In terms of biological role, binds to the 60S ribosomal subunit and prevents its association with the 40S ribosomal subunit to form the 80S initiation complex in the cytoplasm. May also be involved in ribosome biogenesis. In Guillardia theta (Cryptophyte), this protein is Eukaryotic translation initiation factor 6.